Consider the following 170-residue polypeptide: Large ribosomal subunit protein uL22z (170 aa).

This sequence belongs to the universal ribosomal protein uL22 family.

This chain is Large ribosomal subunit protein uL22z, found in Hordeum vulgare (Barley).